The following is a 663-amino-acid chain: UvrABC system protein B (663 aa).

The 241-residue stretch at 31–271 folds into the Helicase ATP-binding domain; it reads DNIESGEKAQ…EQSISKIQAE (241 aa). 44 to 51 contacts ATP; it reads GATGTGKT. Residues 97–120 carry the Beta-hairpin motif; it reads YYDYYQPEAYVPSSDTYIEKDSSV. The 167-residue stretch at 435 to 601 folds into the Helicase C-terminal domain; the sequence is QMDDLLGEIN…TIKKDIRDLI (167 aa). In terms of domain architecture, UVR spans 627 to 662; it reads QEAIKQLQKNMQEAAELLDFELAAQLRDLILELKAI.

This sequence belongs to the UvrB family. In terms of assembly, forms a heterotetramer with UvrA during the search for lesions. Interacts with UvrC in an incision complex.

It is found in the cytoplasm. Functionally, the UvrABC repair system catalyzes the recognition and processing of DNA lesions. A damage recognition complex composed of 2 UvrA and 2 UvrB subunits scans DNA for abnormalities. Upon binding of the UvrA(2)B(2) complex to a putative damaged site, the DNA wraps around one UvrB monomer. DNA wrap is dependent on ATP binding by UvrB and probably causes local melting of the DNA helix, facilitating insertion of UvrB beta-hairpin between the DNA strands. Then UvrB probes one DNA strand for the presence of a lesion. If a lesion is found the UvrA subunits dissociate and the UvrB-DNA preincision complex is formed. This complex is subsequently bound by UvrC and the second UvrB is released. If no lesion is found, the DNA wraps around the other UvrB subunit that will check the other stand for damage. The chain is UvrABC system protein B from Streptococcus equi subsp. zooepidemicus (strain MGCS10565).